Reading from the N-terminus, the 245-residue chain is Nodulation protein G (245 aa).

Val11 to Leu35 lines the NAD(+) pocket. Substrate is bound at residue Ser139. The Proton acceptor role is filled by Tyr152.

Belongs to the short-chain dehydrogenases/reductases (SDR) family.

In terms of biological role, proposed to modify Nod factor fatty acyl chain. This is Nodulation protein G (nodG) from Rhizobium sp. (strain N33).